The primary structure comprises 276 residues: 3-methyl-2-oxobutanoate hydroxymethyltransferase (276 aa).

Mg(2+) is bound by residues Asp-45 and Asp-84. Residues 45-46, Asp-84, and Lys-114 each bind 3-methyl-2-oxobutanoate; that span reads DS. Glu-116 lines the Mg(2+) pocket. Glu-183 acts as the Proton acceptor in catalysis.

This sequence belongs to the PanB family. In terms of assembly, homodecamer; pentamer of dimers. The cofactor is Mg(2+).

It is found in the cytoplasm. The catalysed reaction is 3-methyl-2-oxobutanoate + (6R)-5,10-methylene-5,6,7,8-tetrahydrofolate + H2O = 2-dehydropantoate + (6S)-5,6,7,8-tetrahydrofolate. It participates in cofactor biosynthesis; (R)-pantothenate biosynthesis; (R)-pantoate from 3-methyl-2-oxobutanoate: step 1/2. Its function is as follows. Catalyzes the reversible reaction in which hydroxymethyl group from 5,10-methylenetetrahydrofolate is transferred onto alpha-ketoisovalerate to form ketopantoate. This Carboxydothermus hydrogenoformans (strain ATCC BAA-161 / DSM 6008 / Z-2901) protein is 3-methyl-2-oxobutanoate hydroxymethyltransferase.